The sequence spans 420 residues: uncharacterized protein (420 aa).

The region spanning 7–65 (NIERGSVINVEILNAAHGGQGIAKYDGRVIFVKGAFPGDRLSANITHVKKKFARATIAS) is the TRAM domain. 4 residues coordinate S-adenosyl-L-methionine: Gln-245, Tyr-280, Glu-304, and Asp-349. Cys-376 acts as the Nucleophile in catalysis.

The protein belongs to the class I-like SAM-binding methyltransferase superfamily. RNA M5U methyltransferase family.

This is an uncharacterized protein from Corynebacterium diphtheriae (strain ATCC 700971 / NCTC 13129 / Biotype gravis).